Reading from the N-terminus, the 191-residue chain is UPF0149 protein VCM66_2399 (191 aa).

This sequence belongs to the UPF0149 family.

This Vibrio cholerae serotype O1 (strain M66-2) protein is UPF0149 protein VCM66_2399.